The following is a 146-amino-acid chain: Benzoylsuccinyl-CoA thiolase subunit BbsA (146 aa).

Zn(2+) is bound by residues C42, C45, C55, and C58.

It belongs to the BbsA family. As to quaternary structure, heterotetramer composed of two BbsA subunits and two BbsB subunits. Both BbsA and BbsB are essential for enzymatic activity.

The catalysed reaction is (S)-2-benzoylsuccinyl-CoA + CoA = benzoyl-CoA + succinyl-CoA. It participates in xenobiotic degradation; toluene degradation. Component of the BbsAB thiolase complex, which catalyzes the thiolytic cleavage of (S)-2-benzoylsuccinyl-CoA to succinyl-CoA and benzoyl-CoA, the final step of anaerobic toluene metabolism. The BbsA subunit critically contributes to an induced-fit process for productive binding of a CoA substrate into the active site of BbsB. The protein is Benzoylsuccinyl-CoA thiolase subunit BbsA of Geobacter metallireducens (strain ATCC 53774 / DSM 7210 / GS-15).